Consider the following 323-residue polypeptide: 3-dehydroquinate synthase (323 aa).

The protein belongs to the archaeal-type DHQ synthase family.

It carries out the reaction 2-amino-2,3,7-trideoxy-D-lyxo-hept-6-ulosonate + NAD(+) + H2O = 3-dehydroquinate + NH4(+) + NADH + H(+). Its function is as follows. Catalyzes the oxidative deamination and cyclization of 2-amino-3,7-dideoxy-D-threo-hept-6-ulosonic acid (ADH) to yield 3-dehydroquinate (DHQ), which is fed into the canonical shikimic pathway of aromatic amino acid biosynthesis. This chain is 3-dehydroquinate synthase, found in Archaeoglobus fulgidus (strain ATCC 49558 / DSM 4304 / JCM 9628 / NBRC 100126 / VC-16).